The sequence spans 302 residues: Pantothenate synthetase 4 (302 aa).

An ATP-binding site is contributed by 51–58; it reads MGALHEGH. Catalysis depends on H58, which acts as the Proton donor. Q82 contacts (R)-pantoate. Q82 contacts beta-alanine. 166–169 serves as a coordination point for ATP; the sequence is GRKD. (R)-pantoate is bound at residue Q172. ATP contacts are provided by residues A195 and 203–206; that span reads RSSR.

Belongs to the pantothenate synthetase family. In terms of assembly, homodimer.

It is found in the cytoplasm. It catalyses the reaction (R)-pantoate + beta-alanine + ATP = (R)-pantothenate + AMP + diphosphate + H(+). It functions in the pathway cofactor biosynthesis; (R)-pantothenate biosynthesis; (R)-pantothenate from (R)-pantoate and beta-alanine: step 1/1. Catalyzes the condensation of pantoate with beta-alanine in an ATP-dependent reaction via a pantoyl-adenylate intermediate. In Frankia alni (strain DSM 45986 / CECT 9034 / ACN14a), this protein is Pantothenate synthetase 4.